We begin with the raw amino-acid sequence, 235 residues long: Sugar fermentation stimulation protein homolog (235 aa).

The protein belongs to the SfsA family.

In Roseobacter denitrificans (strain ATCC 33942 / OCh 114) (Erythrobacter sp. (strain OCh 114)), this protein is Sugar fermentation stimulation protein homolog.